Reading from the N-terminus, the 241-residue chain is Microneme antigen (241 aa).

The N-terminal stretch at Met-1–Ser-34 is a signal peptide. Residues Ala-35 to His-103 constitute a propeptide that is removed on maturation. The segment covering His-61–Lys-83 has biased composition (basic and acidic residues). The interval His-61–His-92 is disordered. PAN domains are found at residues Cys-112 to Cys-181 and Cys-185 to Ser-241. 6 disulfide bridges follow: Cys-112/Cys-181, Cys-137/Cys-159, Cys-141/Cys-147, Cys-185/Cys-189, Cys-210/Cys-230, and Cys-214/Cys-220. Ser-121 is an a carbohydrate binding site. Positions 162, 169, and 174 each coordinate a carbohydrate.

This sequence belongs to the microneme antigen family. In terms of assembly, homodimer or heterodimer of major microneme antigen and microneme antigen. Contains six disulfide bonds.

It localises to the cytoplasmic vesicle. Its subcellular location is the secretory vesicle. It is found in the microneme. Functionally, galactose-binding lectin. Plays a role in adhesion to the host cell. Has a potential role in invasion of host cells. In Sarcocystis muris, this protein is Microneme antigen.